The following is a 329-amino-acid chain: Serine/threonine-protein phosphatase PP1-alpha (329 aa).

The Mn(2+) site is built by aspartate 64, histidine 66, aspartate 92, and asparagine 124. Histidine 125 acts as the Proton donor in catalysis. Residues histidine 173 and histidine 248 each contribute to the Mn(2+) site. The tract at residues 309-329 (GMNSGRPAVGGGRPGTTAGKK) is disordered.

This sequence belongs to the PPP phosphatase family. PP-1 subfamily. Interacts with lab-1; the interaction is direct. Interacts with knl-1; the interaction is direct. The cofactor is Mn(2+).

The enzyme catalyses O-phospho-L-seryl-[protein] + H2O = L-seryl-[protein] + phosphate. It catalyses the reaction O-phospho-L-threonyl-[protein] + H2O = L-threonyl-[protein] + phosphate. Serine/threonine-protein phosphatase which antagonizes the function of air-2 in the regulation of chromosome cohesion. Dephosphorylates histone H3 at 'Ser-10'. Dephosphorylates translation initiation factor eIF2alpha. Involved in the activation of chloride channel clh-3 during cell swelling and meiotic maturation. This Caenorhabditis briggsae protein is Serine/threonine-protein phosphatase PP1-alpha (gsp-1).